Reading from the N-terminus, the 202-residue chain is Pyridoxal 5'-phosphate synthase subunit PdxT (202 aa).

49–51 (GES) is a binding site for L-glutamine. Catalysis depends on cysteine 81, which acts as the Nucleophile. L-glutamine contacts are provided by residues arginine 110 and 139–140 (IR). Active-site charge relay system residues include histidine 182 and glutamate 184.

This sequence belongs to the glutaminase PdxT/SNO family. In terms of assembly, in the presence of PdxS, forms a dodecamer of heterodimers. Only shows activity in the heterodimer.

It carries out the reaction aldehydo-D-ribose 5-phosphate + D-glyceraldehyde 3-phosphate + L-glutamine = pyridoxal 5'-phosphate + L-glutamate + phosphate + 3 H2O + H(+). The enzyme catalyses L-glutamine + H2O = L-glutamate + NH4(+). It functions in the pathway cofactor biosynthesis; pyridoxal 5'-phosphate biosynthesis. Functionally, catalyzes the hydrolysis of glutamine to glutamate and ammonia as part of the biosynthesis of pyridoxal 5'-phosphate. The resulting ammonia molecule is channeled to the active site of PdxS. This Rhodococcus jostii (strain RHA1) protein is Pyridoxal 5'-phosphate synthase subunit PdxT.